Reading from the N-terminus, the 336-residue chain is MLFDAALLLSFGGPDGPEQVRPFLENVTRGCNVPPERLDEVTKHYLHFGGVSPINGINLALVNELQVELDLPVYFGNRNWEPYIEDSVVTMRDDGIRCAAVFITSAWSGYSSCTRYVEAIARARRRAGTGAPNLVKLRPYFDHPLFVEMFVDAITAAAASLPAALRSEARLVFTAHSVPVATDRRCGPALYSRQVGYAARLVAAGAGYADYDLTWQSRSGPPYVPWLAPDVGDQLMTLASAGTKAVIVCPIGFVADHIEVVWDLDHELRSQADAAGVAFARAATPNADRRFARLAASLIDELTHDRVPVRVNGSDPVPGCLASINGVPCDLPHCVA.

Residues Ser52 and Tyr116 each contribute to the Fe-coproporphyrin III site. Residues His176 and Glu259 each contribute to the Fe(2+) site.

The protein belongs to the ferrochelatase family.

The protein resides in the cytoplasm. It carries out the reaction Fe-coproporphyrin III + 2 H(+) = coproporphyrin III + Fe(2+). The protein operates within porphyrin-containing compound metabolism; protoheme biosynthesis. In terms of biological role, involved in coproporphyrin-dependent heme b biosynthesis. Catalyzes the insertion of ferrous iron into coproporphyrin III to form Fe-coproporphyrin III. This is Coproporphyrin III ferrochelatase from Mycobacterium leprae (strain Br4923).